The primary structure comprises 386 residues: Enoyl-[acyl-carrier-protein] reductase 2, mitochondrial (386 aa).

A mitochondrion-targeting transit peptide spans methionine 1 to threonine 22. Residue tyrosine 79 is the Proton donor of the active site. Residues asparagine 172, threonine 199–valine 202, arginine 222–arginine 224, tyrosine 296–methionine 299, phenylalanine 321–valine 323, and lysine 381 each bind NADP(+).

It belongs to the zinc-containing alcohol dehydrogenase family. Quinone oxidoreductase subfamily. Homodimer and heterodimer with ETR1.

Its subcellular location is the mitochondrion. It catalyses the reaction a 2,3-saturated acyl-[ACP] + NADP(+) = a (2E)-enoyl-[ACP] + NADPH + H(+). Its function is as follows. Required for respiration and the maintenance of the mitochondrial compartment. Oxidoreductase with a preference for short and medium chain substrates, including trans-2-hexenoyl-CoA (C6), trans-2-decenoyl-CoA (C10), and trans-2-hexadecenoyl-CoA (C16). May play a role in mitochondrial fatty acid synthesis. The polypeptide is Enoyl-[acyl-carrier-protein] reductase 2, mitochondrial (ETR2) (Candida tropicalis (Yeast)).